Consider the following 351-residue polypeptide: Heat shock factor protein HSF30 (351 aa).

The DNA-binding element occupies 29–123 (PPPFLSKTYE…LLKTIKRRRN (95 aa)).

It belongs to the HSF family. Homotrimer. Post-translationally, exhibits temperature-dependent phosphorylation.

The protein resides in the nucleus. DNA-binding protein that specifically binds heat shock promoter elements (HSE) and activates transcription. This is Heat shock factor protein HSF30 (HSF30) from Solanum peruvianum (Peruvian tomato).